A 2493-amino-acid polypeptide reads, in one-letter code: Non-reducing polyketide synthase pkiA (2493 aa).

The interval 129–243 is N-terminal acylcarrier protein transacylase domain (SAT); the sequence is PLLMMTHFVQ…VQYDENRATI (115 aa). Residue Cys160 is the Nucleophile; for transacylase activity of the active site. Catalysis depends on His274, which acts as the Proton donor/acceptor; for transacylase activity. The 418-residue stretch at 401 to 818 folds into the Ketosynthase family 3 (KS3) domain; sequence ETDIAIVGMA…GSNASMVITQ (418 aa). Active-site for beta-ketoacyl synthase activity residues include Cys567, His702, and His741. A malonyl-CoA:ACP transacylase (MAT) region spans residues 926–1261; sequence CFGGQVGRSI…EYAPLLLPPY (336 aa). Residues 1259–1387 are N-terminal hotdog fold; sequence PPYQFERTRH…AHISMHDVRC (129 aa). In terms of domain architecture, PKS/mFAS DH spans 1259–1562; that stretch reads PPYQFERTRH…YSRVAKSLFT (304 aa). His1291 (proton acceptor; for dehydratase activity) is an active-site residue. Positions 1297 to 1558 are product template (PT) domain; it reads APIAPATLLL…LGLRYSRVAK (262 aa). The segment at 1415–1562 is C-terminal hotdog fold; sequence VDDILQGRNV…YSRVAKSLFT (148 aa). Asp1471 (proton donor; for dehydratase activity) is an active-site residue. A Carrier domain is found at 1588-1662; that stretch reads KDLVSRVKAV…DLVQAVQSAL (75 aa). Ser1622 carries the O-(pantetheine 4'-phosphoryl)serine modification. The methyltransferase (CMeT) domain stretch occupies residues 1822-2063; the sequence is REYPEYGGAS…YGHVDWTDGE (242 aa). Residues 2128–2366 form an NADPH-binding domain region; that stretch reads VTGATGSLGS…TPVDVAARII (239 aa).

The cofactor is pantetheine 4'-phosphate.

It catalyses the reaction decanoyl-[ACP] + 4 malonyl-CoA + AH2 + S-adenosyl-L-methionine + 3 H(+) = 2,4-dihydroxy-3-methyl-6-(2-oxoundecyl)benzaldehyde + holo-[ACP] + A + S-adenosyl-L-homocysteine + 4 CO2 + 4 CoA + H2O. The protein operates within secondary metabolite biosynthesis. In terms of biological role, non-reducing polyketide synthase; part of the pki gene cluster that mediates the biosynthesis of 2,4-dihydroxy-3-methyl-6-(2-oxoundecyl)benzaldehyde. The first step in the pathway is the generation of the decanoyl starter unit by the FAS composed of subunits pkiB and pkiC, which is then transferred directly from the FAS to the SAT domain of the non-reducing polyketide synthase pkiA. PkiA condenses the decanoyyl starter unit with 4 malonyl-CoA units and performs one methylation step to yield 2,4-dihydroxy-3-methyl-6-(2-oxoundecyl)benzaldehyde. This chain is Non-reducing polyketide synthase pkiA, found in Emericella nidulans (strain FGSC A4 / ATCC 38163 / CBS 112.46 / NRRL 194 / M139) (Aspergillus nidulans).